The following is a 320-amino-acid chain: Cytosolic Fe-S cluster assembly factor NUBP1 (320 aa).

An N-acetylmethionine modification is found at methionine 1. [4Fe-4S] cluster contacts are provided by cysteine 8, cysteine 22, cysteine 25, and cysteine 31. Glycine 62–serine 69 is an ATP binding site. [4Fe-4S] cluster-binding residues include cysteine 235 and cysteine 238. Serine 319 bears the Phosphoserine mark.

The protein belongs to the Mrp/NBP35 ATP-binding proteins family. NUBP1/NBP35 subfamily. As to quaternary structure, heterotetramer of 2 NUBP1 and 2 NUBP2 chains. Interacts with KIFC1. Interacts with the BBS/CCT complex subunit CCT1. [4Fe-4S] cluster is required as a cofactor.

The protein resides in the cytoplasm. Its subcellular location is the nucleus. The protein localises to the cell projection. It is found in the cytoskeleton. It localises to the cilium axoneme. The protein resides in the cilium basal body. Its subcellular location is the microtubule organizing center. The protein localises to the centrosome. It is found in the centriole. Its function is as follows. Component of the cytosolic iron-sulfur (Fe/S) protein assembly (CIA) machinery. Required for maturation of extramitochondrial Fe-S proteins. The NUBP1-NUBP2 heterotetramer forms a Fe-S scaffold complex, mediating the de novo assembly of an Fe-S cluster and its transfer to target apoproteins. Implicated in the regulation of centrosome duplication. Negatively regulates cilium formation and structure. The protein is Cytosolic Fe-S cluster assembly factor NUBP1 of Rattus norvegicus (Rat).